A 421-amino-acid chain; its full sequence is Alpha-1-antitrypsin (421 aa).

Positions 1–24 (MASSSTWGLLLLAGLCCLVPISLA) are cleaved as a signal peptide. N-linked (GlcNAc...) asparagine glycans are attached at residues Asn-73 and Asn-110. An RCL region spans residues 376–395 (GATILEAIPMSIPPNVKFNK). Position 386 is a phosphoserine (Ser-386).

This sequence belongs to the serpin family. In terms of assembly, interacts with CELA2A. Interacts with ERGIC3 and LMAN1/ERGIC53. Interacts with PRSS1/Trypsin.

It is found in the secreted. Inhibitor of serine proteases. Its primary target is elastase, but it also has a moderate affinity for plasmin and thrombin. This chain is Alpha-1-antitrypsin (SERPINA1), found in Sus scrofa (Pig).